The chain runs to 203 residues: tRNA (guanine-N(7)-)-methyltransferase (203 aa).

Residues glutamate 34, glutamate 59, aspartate 86, and aspartate 107 each coordinate S-adenosyl-L-methionine. Residue aspartate 107 is part of the active site. Substrate contacts are provided by residues lysine 111, aspartate 143, and 181-184 (TSYE).

Belongs to the class I-like SAM-binding methyltransferase superfamily. TrmB family.

The catalysed reaction is guanosine(46) in tRNA + S-adenosyl-L-methionine = N(7)-methylguanosine(46) in tRNA + S-adenosyl-L-homocysteine. It functions in the pathway tRNA modification; N(7)-methylguanine-tRNA biosynthesis. Its function is as follows. Catalyzes the formation of N(7)-methylguanine at position 46 (m7G46) in tRNA. This Mycoplasmopsis pulmonis (strain UAB CTIP) (Mycoplasma pulmonis) protein is tRNA (guanine-N(7)-)-methyltransferase.